The following is a 306-amino-acid chain: Leucine-rich repeat-containing protein 75B (306 aa).

The tract at residues 1–22 is disordered; that stretch reads MGARLGRRARADAPAAPSAGPA. Positions 12 to 22 are enriched in low complexity; the sequence is DAPAAPSAGPA. 2 LRR repeats span residues 173 to 186 and 198 to 211; these read LVVL…LSDE and LPRL…GNRL.

The protein belongs to the LRRC75 family.

In terms of biological role, may suppress myogenic differentiation by modulating MYOG expression and Erk1/2 signaling. The sequence is that of Leucine-rich repeat-containing protein 75B from Mus musculus (Mouse).